The sequence spans 700 residues: MARQTPIERYRNIGISAHIDAGKTTTTERILYYTGVNHKIGEVHDGAATMDWMEQEQERGITITSAATTCFWKGMDRSLPEHRFNIIDTPGHVDFTIEVERSMRVLDGACMVYCAVGGVQPQSETVWRQANKYKVPRLAFVNKMDRTGANFFKVVDQMKTRLRANPVPVVVPIGAEDSFTGVVDLLKMKAIIWDEASQGMKFSYEDIPAGLEGVAQEWREKMVEAAAEASEELMNKYLETGDLTEDEIKLALRTRTIACEIQPMLCGTAFKNKGVQRMLDAVIDYLPSPVDIPPVTGTDDDDQPISRRADDKEKFSALAFKLMTDPFVGQLTFVRVYSGVLQSGSSVYNPIRGKKERIGRILQMHANQREEIKEILAGDIAACVGLKEVTTGETLCDIDSPITLVKMIFPEPVISQAVEPKTKADQEKMGIALGRLAAEDPSFRVRTDEESGQTIISGMGELHLEIIVDRMKREFGVEANVGKPQVAYRETIRDLVKDVEGKFVRQSGGKGQYGHVVLTVEPQEPGAGFQFVDAIKGGVVPREFIPAVEKGLIDTLPNGVLAGFPVVDVKVTLTFGSYHEVDSNENAFKMAASMGFKDGMRKAKPVILEPMMAVEVETPEDYAGTVMGDLSSRRGMVQGMDDMVGGGKVIKAEVPLSEMFGYSTSLRSATQGRATYTMEFKHYSEAPKNVADAIITARGK.

The 283-residue stretch at 8–290 folds into the tr-type G domain; that stretch reads ERYRNIGISA…AVIDYLPSPV (283 aa). GTP is bound by residues 17–24, 88–92, and 142–145; these read AHIDAGKT, DTPGH, and NKMD.

Belongs to the TRAFAC class translation factor GTPase superfamily. Classic translation factor GTPase family. EF-G/EF-2 subfamily.

It is found in the cytoplasm. In terms of biological role, catalyzes the GTP-dependent ribosomal translocation step during translation elongation. During this step, the ribosome changes from the pre-translocational (PRE) to the post-translocational (POST) state as the newly formed A-site-bound peptidyl-tRNA and P-site-bound deacylated tRNA move to the P and E sites, respectively. Catalyzes the coordinated movement of the two tRNA molecules, the mRNA and conformational changes in the ribosome. The polypeptide is Elongation factor G (Leptothrix cholodnii (strain ATCC 51168 / LMG 8142 / SP-6) (Leptothrix discophora (strain SP-6))).